Here is an 879-residue protein sequence, read N- to C-terminus: Valine--tRNA ligase (879 aa).

Positions 45 to 55 match the 'HIGH' region motif; the sequence is PNVTGKLHLGH. The short motif at 521–525 is the 'KMSKS' region element; that stretch reads KMSKS. Lys-524 serves as a coordination point for ATP. Residues 806-879 adopt a coiled-coil conformation; that stretch reads LTELVNVDEE…ERIQDLKESK (74 aa).

The protein belongs to the class-I aminoacyl-tRNA synthetase family. ValS type 1 subfamily. As to quaternary structure, monomer.

It is found in the cytoplasm. The enzyme catalyses tRNA(Val) + L-valine + ATP = L-valyl-tRNA(Val) + AMP + diphosphate. Its function is as follows. Catalyzes the attachment of valine to tRNA(Val). As ValRS can inadvertently accommodate and process structurally similar amino acids such as threonine, to avoid such errors, it has a 'posttransfer' editing activity that hydrolyzes mischarged Thr-tRNA(Val) in a tRNA-dependent manner. This chain is Valine--tRNA ligase, found in Lactobacillus acidophilus (strain ATCC 700396 / NCK56 / N2 / NCFM).